A 483-amino-acid polypeptide reads, in one-letter code: Matrix metalloproteinase-20 (483 aa).

A signal peptide spans 1–22; sequence MKVLPASGLAVLLVTALKFSAA. Positions 23–107 are cleaved as a propeptide — activation peptide; the sequence is APSLFAATPR…PRCGVPDVAN (85 aa). The Cysteine switch motif lies at 98-105; it reads PRCGVPDV. Cys-100 contributes to the Zn(2+) binding site. Residues Glu-164, Ala-165, and Asp-166 each contribute to the Ca(2+) site. Residues His-176 and Asp-178 each coordinate Zn(2+). Ca(2+) contacts are provided by Asp-183, Gly-184, Arg-186, and Thr-188. Residue His-191 participates in Zn(2+) binding. Residues Glu-197, Gly-198, Gly-200, and Asp-202 each coordinate Ca(2+). His-204 contributes to the Zn(2+) binding site. 2 residues coordinate Ca(2+): Asp-206 and Glu-209. His-226 serves as a coordination point for Zn(2+). Glu-227 is an active-site residue. His-230 and His-236 together coordinate Zn(2+). Hemopexin repeat units lie at residues 293–343, 344–389, 391–439, and 440–483; these read PDIC…FPQL, MSNV…GFPR, VQRI…FSGV, and NGQI…WIGC. Cys-296 and Cys-483 are oxidised to a cystine.

The protein belongs to the peptidase M10A family. Zn(2+) is required as a cofactor. Ca(2+) serves as cofactor. Autoactivates at least at the 107-Asn-|-Tyr-108 site. As to expression, expressed specifically in the enamel organ.

The protein resides in the secreted. Its subcellular location is the extracellular space. It localises to the extracellular matrix. In terms of biological role, degrades amelogenin, the major protein component of the enamel matrix and two of the macromolecules characterizing the cartilage extracellular matrix: aggrecan and the cartilage oligomeric matrix protein (COMP). May play a central role in tooth enamel formation. The protein is Matrix metalloproteinase-20 (MMP20) of Sus scrofa (Pig).